Consider the following 199-residue polypeptide: NAD(P)H dehydrogenase (quinone) (199 aa).

The Flavodoxin-like domain occupies 4-190 (ILVLYYSTYG…DGARFQGRHV (187 aa)). FMN contacts are provided by residues 10-15 (STYGHI) and 78-80 (TRF). Tyr12 contributes to the NAD(+) binding site. Trp98 provides a ligand contact to substrate. FMN contacts are provided by residues 113–119 (STATQHG) and His134.

Belongs to the WrbA family. It depends on FMN as a cofactor.

It carries out the reaction a quinone + NADH + H(+) = a quinol + NAD(+). It catalyses the reaction a quinone + NADPH + H(+) = a quinol + NADP(+). The sequence is that of NAD(P)H dehydrogenase (quinone) from Rhizorhabdus wittichii (strain DSM 6014 / CCUG 31198 / JCM 15750 / NBRC 105917 / EY 4224 / RW1) (Sphingomonas wittichii).